Here is a 128-residue protein sequence, read N- to C-terminus: Glycine cleavage system H protein (128 aa).

The region spanning 24–106 is the Lipoyl-binding domain; that stretch reads VATVGITAFA…YNNGWLLKIK (83 aa). At Lys-65 the chain carries N6-lipoyllysine.

The protein belongs to the GcvH family. The glycine cleavage system is composed of four proteins: P, T, L and H. Requires (R)-lipoate as cofactor.

The glycine cleavage system catalyzes the degradation of glycine. The H protein shuttles the methylamine group of glycine from the P protein to the T protein. The polypeptide is Glycine cleavage system H protein (Acaryochloris marina (strain MBIC 11017)).